We begin with the raw amino-acid sequence, 513 residues long: V-type proton ATPase subunit B, kidney isoform (513 aa).

Residue arginine 394 participates in ATP binding. A PDZ-binding motif is present at residues 510–513 (DTAL).

It belongs to the ATPase alpha/beta chains family. As to quaternary structure, V-ATPase is a heteromultimeric enzyme made up of two complexes: the ATP-hydrolytic V1 complex and the proton translocation V0 complex. The V1 complex consists of three catalytic AB heterodimers that form a heterohexamer, three peripheral stalks each consisting of EG heterodimers, one central rotor including subunits D and F, and the regulatory subunits C and H. The proton translocation complex V0 consists of the proton transport subunit a, a ring of proteolipid subunits c9c'', rotary subunit d, subunits e and f, and the accessory subunits ATP6AP1/Ac45 and ATP6AP2/PRR. Forms a complex with NHERF1 and SCL4A7. As to expression, kidney; localizes to early distal nephron, encompassing thick ascending limbs and distal convoluted tubules (at protein level). Expressed in the cochlea and endolymphatic sac.

It localises to the apical cell membrane. It is found in the basolateral cell membrane. In terms of biological role, non-catalytic subunit of the V1 complex of vacuolar(H+)-ATPase (V-ATPase), a multisubunit enzyme composed of a peripheral complex (V1) that hydrolyzes ATP and a membrane integral complex (V0) that translocates protons. V-ATPase is responsible for acidifying and maintaining the pH of intracellular compartments and in some cell types, is targeted to the plasma membrane, where it is responsible for acidifying the extracellular environment. Essential for the proper assembly and activity of V-ATPase. In renal intercalated cells, mediates secretion of protons (H+) into the urine thereby ensuring correct urinary acidification. Required for optimal olfactory function by mediating the acidification of the nasal olfactory epithelium. The sequence is that of V-type proton ATPase subunit B, kidney isoform (ATP6V1B1) from Homo sapiens (Human).